Consider the following 608-residue polypeptide: Dextranase (608 aa).

A signal peptide spans 1–19; sequence MATMLKLLALTLAISESAI. Positions 20 to 34 are excised as a propeptide; sequence GAVMHPPGNSHPGTH. Asparagine 39, asparagine 571, and asparagine 574 each carry an N-linked (GlcNAc...) asparagine glycan.

This sequence belongs to the glycosyl hydrolase 49 family. Post-translationally, N-glycosylated.

Its subcellular location is the secreted. It catalyses the reaction Endohydrolysis of (1-&gt;6)-alpha-D-glucosidic linkages in dextran.. The protein is Dextranase (DEX) of Talaromyces minioluteus (Filamentous fungus).